The following is a 203-amino-acid chain: Phosphatidylglycerophosphatase B (203 aa).

A topological domain (cytoplasmic) is located at residue Met-1. The helical transmembrane segment at 2 to 17 (YKPVSLFLFFLILAAA) threads the bilayer. Topologically, residues 18–55 (IHTNAVQSADEAISKAAVLIRQPWLNEVMTGITHLGAS) are extracellular. Residues 56 to 74 (SFLLPLIVIIGAGMFFYRK) traverse the membrane as a helical segment. Over 75 to 78 (TWDG) the chain is Cytoplasmic. Residues 79–99 (LLMLLVFGTDRLLNKVLKEWI) form a helical membrane-spanning segment. Positions 96–104 (KEWIERVRP) are phosphatase sequence motif I. Residues 100-119 (ERVRPDFAPLVHESSFSFPS) are Extracellular-facing. Residues 118–121 (PSGH) form a phosphatase sequence motif II region. A helical transmembrane segment spans residues 120-139 (GHSMNAACVYPVIAYFLVKH). The active-site Proton donors is the His-121. Residues 140–146 (LPFLSKH) lie on the Cytoplasmic side of the membrane. The chain crosses the membrane as a helical span at residues 147 to 167 (KKMVYIIAGVIAVLVGISRVY). Residues 164 to 175 (SRVYLGVHFVTD) are phosphatase sequence motif III. The Extracellular portion of the chain corresponds to 168 to 172 (LGVHF). His-171 (nucleophile) is an active-site residue. Residues 173–196 (VTDVLGGFSLGLLLFFLVKGFDEK) traverse the membrane as a helical segment. The Cytoplasmic segment spans residues 197–203 (IKRFRQK).

The protein belongs to the PA-phosphatase related phosphoesterase family.

It is found in the cell membrane. The catalysed reaction is a 1,2-diacyl-sn-glycero-3-phospho-(1'-sn-glycero-3'-phosphate) + H2O = a 1,2-diacyl-sn-glycero-3-phospho-(1'-sn-glycerol) + phosphate. Functionally, catalyzes the dephosphorylation of phosphatidylglycerophosphate (PGP) to phosphatidylglycerol. Also has undecaprenyl pyrophosphate phosphatase activity, required for the biosynthesis of the lipid carrier undecaprenyl phosphate. This chain is Phosphatidylglycerophosphatase B, found in Bacillus subtilis (strain 168).